Reading from the N-terminus, the 283-residue chain is Undecaprenyl-diphosphatase (283 aa).

8 helical membrane-spanning segments follow: residues 4 to 24 (LLILKAVIMGIVEGITEFLPI), 45 to 65 (ADLFIVVIQLGAILAVIYEYW), 91 to 111 (QLGLSLIVATIPVMLVGFTLA), 118 to 138 (LFNPYTVAIMLILGGLLIFYV), 153 to 173 (VSLKTALLIGLMQCLALIPGT), 194 to 214 (AEFSFFLGIPVIIGAGLLDLL), 228 to 248 (ILGVGVLVSFVVGLLCIRWLV), and 258 to 278 (IFAWLRIITGIIVLLVAWIFG).

This sequence belongs to the UppP family.

Its subcellular location is the cell inner membrane. The enzyme catalyses di-trans,octa-cis-undecaprenyl diphosphate + H2O = di-trans,octa-cis-undecaprenyl phosphate + phosphate + H(+). Functionally, catalyzes the dephosphorylation of undecaprenyl diphosphate (UPP). Confers resistance to bacitracin. This is Undecaprenyl-diphosphatase from Psychrobacter sp. (strain PRwf-1).